Reading from the N-terminus, the 424-residue chain is Probable carboxypeptidase AN5749 (424 aa).

A signal peptide spans 1-17 (MNLSILAALALVSFSTA). Asn-58 is a glycosylation site (N-linked (GlcNAc...) asparagine). Asp-139 lines the Zn(2+) pocket. The active-site Proton acceptor is Glu-171. Glu-172 is a binding site for Zn(2+). 2 N-linked (GlcNAc...) asparagine glycosylation sites follow: Asn-184 and Asn-323.

Belongs to the peptidase M20A family. The cofactor is Zn(2+).

It is found in the secreted. The sequence is that of Probable carboxypeptidase AN5749 from Emericella nidulans (strain FGSC A4 / ATCC 38163 / CBS 112.46 / NRRL 194 / M139) (Aspergillus nidulans).